We begin with the raw amino-acid sequence, 75 residues long: Vacuolar ATPase assembly integral membrane protein VMA21 (75 aa).

Over M1–G8 the chain is Cytoplasmic. The helical transmembrane segment at V9–F29 threads the bilayer. Topologically, residues S30–S41 are lumenal. Residues G42–M62 form a helical membrane-spanning segment. The Cytoplasmic segment spans residues E63 to D75.

Belongs to the VMA21 family.

The protein resides in the endoplasmic reticulum membrane. The protein localises to the endoplasmic reticulum-Golgi intermediate compartment membrane. It is found in the cytoplasmic vesicle. Its subcellular location is the COPII-coated vesicle membrane. Its function is as follows. Required for the assembly of the V0 complex of the vacuolar ATPase (V-ATPase) in the endoplasmic reticulum. The chain is Vacuolar ATPase assembly integral membrane protein VMA21 from Vanderwaltozyma polyspora (strain ATCC 22028 / DSM 70294 / BCRC 21397 / CBS 2163 / NBRC 10782 / NRRL Y-8283 / UCD 57-17) (Kluyveromyces polysporus).